A 132-amino-acid chain; its full sequence is Small ribosomal subunit protein uS8c (132 aa).

It belongs to the universal ribosomal protein uS8 family. As to quaternary structure, part of the 30S ribosomal subunit.

It localises to the plastid. The protein localises to the chloroplast. Functionally, one of the primary rRNA binding proteins, it binds directly to 16S rRNA central domain where it helps coordinate assembly of the platform of the 30S subunit. The chain is Small ribosomal subunit protein uS8c (rps8) from Psilotum nudum (Whisk fern).